Reading from the N-terminus, the 394-residue chain is 1-deoxy-D-xylulose 5-phosphate reductoisomerase (394 aa).

The NADPH site is built by T10, G11, S12, I13, G38, R39, N40, and N123. K124 contacts 1-deoxy-D-xylulose 5-phosphate. An NADPH-binding site is contributed by E125. D149 is a Mn(2+) binding site. 1-deoxy-D-xylulose 5-phosphate is bound by residues S150, E151, S175, and H198. Mn(2+) is bound at residue E151. An NADPH-binding site is contributed by G204. S211, N216, K217, and E220 together coordinate 1-deoxy-D-xylulose 5-phosphate. Residue E220 participates in Mn(2+) binding.

The protein belongs to the DXR family. It depends on Mg(2+) as a cofactor. Mn(2+) is required as a cofactor.

The enzyme catalyses 2-C-methyl-D-erythritol 4-phosphate + NADP(+) = 1-deoxy-D-xylulose 5-phosphate + NADPH + H(+). Its pathway is isoprenoid biosynthesis; isopentenyl diphosphate biosynthesis via DXP pathway; isopentenyl diphosphate from 1-deoxy-D-xylulose 5-phosphate: step 1/6. Functionally, catalyzes the NADPH-dependent rearrangement and reduction of 1-deoxy-D-xylulose-5-phosphate (DXP) to 2-C-methyl-D-erythritol 4-phosphate (MEP). The chain is 1-deoxy-D-xylulose 5-phosphate reductoisomerase from Cereibacter sphaeroides (strain ATCC 17029 / ATH 2.4.9) (Rhodobacter sphaeroides).